Reading from the N-terminus, the 240-residue chain is Large ribosomal subunit protein bL25 (240 aa).

2 disordered regions span residues Met-1–Arg-20 and Pro-220–Lys-240. Low complexity predominate over residues Pro-220–Gly-229. A compositionally biased stretch (basic and acidic residues) spans Gly-230 to Lys-240.

This sequence belongs to the bacterial ribosomal protein bL25 family. CTC subfamily. In terms of assembly, part of the 50S ribosomal subunit; part of the 5S rRNA/L5/L18/L25 subcomplex. Contacts the 5S rRNA. Binds to the 5S rRNA independently of L5 and L18.

Its function is as follows. This is one of the proteins that binds to the 5S RNA in the ribosome where it forms part of the central protuberance. This Anaeromyxobacter dehalogenans (strain 2CP-C) protein is Large ribosomal subunit protein bL25.